A 451-amino-acid polypeptide reads, in one-letter code: Proton-coupled amino acid transporter-like protein acs (451 aa).

Residues 1-48 are Cytoplasmic-facing; that stretch reads MNDDIKTVTVYPTTLELTTPTKSANGSNDDYDPHQHRELKNPTTNFQT. The chain crosses the membrane as a helical span at residues 49–69; that stretch reads FAHFLKASVGTGVLAMPSAFA. The Extracellular segment spans residues 70–80; that stretch reads HAGYVNGTLLT. N75 carries an N-linked (GlcNAc...) asparagine glycan. The helical transmembrane segment at 81–101 threads the bilayer; it reads LIIGSLALYCLHILIKCMYIL. The Cytoplasmic segment spans residues 102–136; sequence CKRQRVPYVSFSQAMNLGLKQGPPWLRCLAPIAVP. A helical membrane pass occupies residues 137-157; it reads FVDGFLAFYHFGICCVYVVFI. The Extracellular segment spans residues 158–167; it reads AESIKQLVDE. A helical transmembrane segment spans residues 168–188; the sequence is YLVVWDVRIHMCIIIVPLLLI. Over 189-199 the chain is Cytoplasmic; sequence YSIKNLKLLAP. A helical membrane pass occupies residues 200-220; sequence FSSAANLLLLVGFGIILYYIF. Residues 221–237 lie on the Extracellular side of the membrane; sequence EELPPLSERDPFVAAGK. A helical transmembrane segment spans residues 238-258; that stretch reads LPTFFGTVLFALEAVGVILAI. Topologically, residues 259-272 are cytoplasmic; that stretch reads EENMATPKSFVGPC. A helical membrane pass occupies residues 273–293; it reads GILNSGMSIVLGLYVLLGFFG. The Extracellular portion of the chain corresponds to 294–320; that stretch reads YWKYGNESEGSITLNIPQSEIPAQVVK. N299 carries N-linked (GlcNAc...) asparagine glycosylation. Residues 321–341 traverse the membrane as a helical segment; sequence VFFAITTWISYALQGYVTAHI. Residues 342–357 lie on the Cytoplasmic side of the membrane; it reads LWDKYLAKRFKETRQT. The chain crosses the membrane as a helical span at residues 358–378; it reads FYELIFRAIIVLLTFGCAVAI. Topologically, residues 379–382 are extracellular; that stretch reads PDLS. The chain crosses the membrane as a helical span at residues 383 to 403; it reads VFLSLVGSFCLSILGLIFPVL. The Cytoplasmic segment spans residues 404 to 420; that stretch reads LQICVQYTEGYGPFRIK. A helical transmembrane segment spans residues 421–441; the sequence is LIINLLLLCFGIFGGVVGTYV. Topologically, residues 442–451 are extracellular; the sequence is SILDIIAVYK.

The protein belongs to the amino acid/polyamine transporter 2 family. As to expression, expressed in the proximal and distal regions of the midgut; expressed in enterocytes and progenitor cells. Expression increases in response to intestinal bacterial infection and spreads further into the midgut, eventually covering the entire midgut.

The protein resides in the cell membrane. Its subcellular location is the late endosome membrane. It localises to the lysosome membrane. It is found in the basal cell membrane. Amino acid transporter which has pH-dependent electrogenic transport activity for alanine, glycine and proline. Plays a role in positive regulation of growth by directly or indirectly modulating the effects of the TOR signaling pathway. Required in enterocytes for the efficient recovery of gut epithelium following the cytoplasmic purge response to bacterial infection. Acts cell-autonomously to promote the retrograde transport of amino acids into the intestinal epithelium. Acts non-cell-autonomously through the insulin signaling pathway to stimulate Myc expression and the release of amino acids from nutrient stores into the hemolymph. This is Proton-coupled amino acid transporter-like protein acs from Drosophila melanogaster (Fruit fly).